We begin with the raw amino-acid sequence, 432 residues long: Enolase (432 aa).

Residue Q166 participates in (2R)-2-phosphoglycerate binding. Catalysis depends on E208, which acts as the Proton donor. The Mg(2+) site is built by D245, E291, and D318. (2R)-2-phosphoglycerate is bound by residues K343, R372, S373, and K394. K343 acts as the Proton acceptor in catalysis.

This sequence belongs to the enolase family. Requires Mg(2+) as cofactor.

Its subcellular location is the cytoplasm. It localises to the secreted. The protein resides in the cell surface. It catalyses the reaction (2R)-2-phosphoglycerate = phosphoenolpyruvate + H2O. The protein operates within carbohydrate degradation; glycolysis; pyruvate from D-glyceraldehyde 3-phosphate: step 4/5. Catalyzes the reversible conversion of 2-phosphoglycerate (2-PG) into phosphoenolpyruvate (PEP). It is essential for the degradation of carbohydrates via glycolysis. This Leptospira borgpetersenii serovar Hardjo-bovis (strain L550) protein is Enolase.